The sequence spans 568 residues: Matrix metalloproteinase-21 (568 aa).

A signal peptide spans 1 to 24 (MLAASVLRLTLPLCWLVAPQPTQP). Residues 25-143 (ERLFHSRDRS…SLGLRPRARQ (119 aa)) constitute a propeptide that is removed on maturation. Positions 110–117 (PRCGVPDT) match the Cysteine switch motif. Residues cysteine 112 and histidine 282 each coordinate Zn(2+). Glutamate 283 is a catalytic residue. The Zn(2+) site is built by histidine 286 and histidine 292. A disulfide bridge links cysteine 328 with cysteine 559. 4 Hemopexin repeats span residues 329-388 (KGSF…WRGI), 390-446 (TQSI…FPGI), 447-495 (PSPL…FPAI), and 502-558 (FRNL…WFDV). Residue asparagine 371 is glycosylated (N-linked (GlcNAc...) asparagine).

It belongs to the peptidase M10A family. Zn(2+) serves as cofactor. Ca(2+) is required as a cofactor. Post-translationally, the precursor is cleaved by a furin endopeptidase.

The protein localises to the secreted. Its function is as follows. Plays a specialized role in the generation of left-right asymmetry during embryogenesis. May act as a negative regulator of the NOTCH-signaling pathway. Cleaves alpha-1-antitrypsin. This Mus musculus (Mouse) protein is Matrix metalloproteinase-21 (Mmp21).